The primary structure comprises 146 residues: Hemoglobin subunit beta (146 aa).

Val1 is subject to N-acetylvaline. The region spanning 2–146 is the Globin domain; that stretch reads HLTADEKAAV…VANALAHKYH (145 aa). Phosphothreonine is present on Thr12. Residue Ser44 is modified to Phosphoserine. Lys59 carries the N6-acetyllysine modification. His63 provides a ligand contact to heme b. Lys82 carries the post-translational modification N6-acetyllysine. His92 contacts heme b. Residue Cys93 is modified to S-nitrosocysteine. An N6-acetyllysine modification is found at Lys144.

Belongs to the globin family. As to quaternary structure, heterotetramer of two alpha chains and two beta chains. In terms of tissue distribution, red blood cells.

Functionally, involved in oxygen transport from the lung to the various peripheral tissues. This Odobenus rosmarus divergens (Pacific walrus) protein is Hemoglobin subunit beta (HBB).